The primary structure comprises 324 residues: MKPSIILYKTLPDDLLHRLEAHFTVTQVPNLHPETVARHAQAFASAQGLLGASETVNRALLEKMPALRAASTISVGYDNVEVDALTARKIVLMHTPAVLTETVADTVMALMLTTARRVVDVAERVKAGEWTESIGPAWFGIDVHHKTLGIVGMGRIGMALAQRAHFGFTMPVLYHARRRHQEAEDRFNARYCDLDTLLQEADFVCVILPLTAETRHLFGATQFARMKSSAIFINAGRGPVVDENALIAALQNGEIYAAGLDVFEQEPLSVDSPLLNMSNVVAVPHIGSATHETRYNMMACAVDNLIDALQGKIEKNCVNPQAAG.

Residues arginine 237 and glutamate 266 contribute to the active site. Residue histidine 285 is the Proton donor of the active site.

This sequence belongs to the D-isomer specific 2-hydroxyacid dehydrogenase family. GhrB subfamily. As to quaternary structure, homodimer.

It localises to the cytoplasm. The catalysed reaction is glycolate + NADP(+) = glyoxylate + NADPH + H(+). It catalyses the reaction (R)-glycerate + NAD(+) = 3-hydroxypyruvate + NADH + H(+). The enzyme catalyses (R)-glycerate + NADP(+) = 3-hydroxypyruvate + NADPH + H(+). Functionally, catalyzes the NADPH-dependent reduction of glyoxylate and hydroxypyruvate into glycolate and glycerate, respectively. The polypeptide is Glyoxylate/hydroxypyruvate reductase B (Salmonella agona (strain SL483)).